A 362-amino-acid chain; its full sequence is UDP-N-acetylglucosamine--N-acetylmuramyl-(pentapeptide) pyrophosphoryl-undecaprenol N-acetylglucosamine transferase (362 aa).

UDP-N-acetyl-alpha-D-glucosamine contacts are provided by residues 15 to 17, N127, R165, S191, I247, 266 to 271, and Q292; these read TGG and ALTVSE.

It belongs to the glycosyltransferase 28 family. MurG subfamily.

The protein resides in the cell inner membrane. The catalysed reaction is di-trans,octa-cis-undecaprenyl diphospho-N-acetyl-alpha-D-muramoyl-L-alanyl-D-glutamyl-meso-2,6-diaminopimeloyl-D-alanyl-D-alanine + UDP-N-acetyl-alpha-D-glucosamine = di-trans,octa-cis-undecaprenyl diphospho-[N-acetyl-alpha-D-glucosaminyl-(1-&gt;4)]-N-acetyl-alpha-D-muramoyl-L-alanyl-D-glutamyl-meso-2,6-diaminopimeloyl-D-alanyl-D-alanine + UDP + H(+). It participates in cell wall biogenesis; peptidoglycan biosynthesis. Functionally, cell wall formation. Catalyzes the transfer of a GlcNAc subunit on undecaprenyl-pyrophosphoryl-MurNAc-pentapeptide (lipid intermediate I) to form undecaprenyl-pyrophosphoryl-MurNAc-(pentapeptide)GlcNAc (lipid intermediate II). In Shewanella baltica (strain OS223), this protein is UDP-N-acetylglucosamine--N-acetylmuramyl-(pentapeptide) pyrophosphoryl-undecaprenol N-acetylglucosamine transferase.